The chain runs to 186 residues: TATA-box-binding protein (186 aa).

A run of 2 repeats spans residues 10–86 (IENV…FDKL) and 101–179 (VQNI…VERL).

The protein belongs to the TBP family.

Functionally, general factor that plays a role in the activation of archaeal genes transcribed by RNA polymerase. Binds specifically to the TATA box promoter element which lies close to the position of transcription initiation. The polypeptide is TATA-box-binding protein (Haloarcula marismortui (strain ATCC 43049 / DSM 3752 / JCM 8966 / VKM B-1809) (Halobacterium marismortui)).